The following is a 394-amino-acid chain: uncharacterized protein (394 aa).

12 helical membrane passes run Ala13–Leu35, Val50–Ser72, Leu79–Ser97, Gly107–Leu129, Ile136–Ile158, Phe168–Leu190, Ile218–Leu240, Val250–Phe272, Val277–Leu299, Ile309–Asn331, Ala344–Ser366, and Phe371–Ile393.

It belongs to the major facilitator superfamily.

The protein resides in the cell membrane. This is an uncharacterized protein from Buchnera aphidicola subsp. Baizongia pistaciae (strain Bp).